The following is a 194-amino-acid chain: ATP-dependent Clp protease proteolytic subunit (194 aa).

Residue serine 98 is the Nucleophile of the active site. Residue histidine 123 is part of the active site.

Belongs to the peptidase S14 family. Fourteen ClpP subunits assemble into 2 heptameric rings which stack back to back to give a disk-like structure with a central cavity, resembling the structure of eukaryotic proteasomes.

The protein resides in the cytoplasm. It carries out the reaction Hydrolysis of proteins to small peptides in the presence of ATP and magnesium. alpha-casein is the usual test substrate. In the absence of ATP, only oligopeptides shorter than five residues are hydrolyzed (such as succinyl-Leu-Tyr-|-NHMec, and Leu-Tyr-Leu-|-Tyr-Trp, in which cleavage of the -Tyr-|-Leu- and -Tyr-|-Trp bonds also occurs).. Functionally, cleaves peptides in various proteins in a process that requires ATP hydrolysis. Has a chymotrypsin-like activity. Plays a major role in the degradation of misfolded proteins. The sequence is that of ATP-dependent Clp protease proteolytic subunit from Clostridium botulinum (strain Hall / ATCC 3502 / NCTC 13319 / Type A).